Here is a 182-residue protein sequence, read N- to C-terminus: Plasmolipin (182 aa).

The Cytoplasmic portion of the chain corresponds to methionine 1 to serine 35. Serine 9 is subject to Phosphoserine. One can recognise an MARVEL domain in the interval phenylalanine 32–arginine 166. The helical transmembrane segment at arginine 36 to alanine 56 threads the bilayer. Residues aspartate 57–tryptophan 68 lie on the Extracellular side of the membrane. The chain crosses the membrane as a helical span at residues valine 69 to phenylalanine 89. Over glutamine 90–proline 99 the chain is Cytoplasmic. A helical membrane pass occupies residues tryptophan 100–isoleucine 120. Over alanine 121–alanine 141 the chain is Extracellular. The helical transmembrane segment at alanine 142 to tyrosine 162 threads the bilayer. The Cytoplasmic segment spans residues glutamine 163–alanine 182.

Belongs to the MAL family. In terms of assembly, forms oligomers. Phosphorylated.

It is found in the cell membrane. The protein localises to the myelin membrane. It localises to the apical cell membrane. Its subcellular location is the golgi apparatus. In terms of biological role, main component of the myelin sheath that plays an important role in myelin membrane biogenesis and myelination. Plays an essential function in apical endocytosis. Regulates epithelial development through the regulation of apical endocytosis. Part of the intracellular machinery that mediates basolateral-to-apical transport of ICAM-1, an essential adhesion receptor in epithelial cells, from the subapical compartment in hepatic epithelial cells. This chain is Plasmolipin, found in Homo sapiens (Human).